The chain runs to 379 residues: Probable leucine aminopeptidase TRV_05286 (379 aa).

An N-terminal signal peptide occupies residues 1 to 18 (MKIATLAVVSAFAATAIA). Zn(2+) contacts are provided by H182 and D201. N-linked (GlcNAc...) asparagine glycans are attached at residues N202 and N226. E240 and D267 together coordinate Zn(2+). C312 and C316 form a disulfide bridge. Residue H345 coordinates Zn(2+).

This sequence belongs to the peptidase M28 family. M28E subfamily. In terms of assembly, monomer. Zn(2+) is required as a cofactor.

The protein resides in the secreted. Probable extracellular aminopeptidase which contributes to pathogenicity. The chain is Probable leucine aminopeptidase TRV_05286 from Trichophyton verrucosum (strain HKI 0517).